The sequence spans 396 residues: Na(+)/H(+) antiporter NhaA 2 (396 aa).

The next 11 helical transmembrane spans lie at 17–37 (LSGL…NSDF), 62–82 (LLHW…GLEI), 98–118 (SFPI…YISL), 125–145 (GFGV…MLLG), 154–174 (LFLV…VAIF), 179–199 (LHFE…FLNY), 209–229 (IILG…STIA), 268–288 (FSAF…IIDF), 296–316 (LIVL…IFSF), 337–357 (IFAV…ISHL), and 368–388 (VKLG…VLLI).

It belongs to the NhaA Na(+)/H(+) (TC 2.A.33) antiporter family.

The protein resides in the cell inner membrane. It catalyses the reaction Na(+)(in) + 2 H(+)(out) = Na(+)(out) + 2 H(+)(in). Functionally, na(+)/H(+) antiporter that extrudes sodium in exchange for external protons. The polypeptide is Na(+)/H(+) antiporter NhaA 2 (Aliarcobacter butzleri (strain RM4018) (Arcobacter butzleri)).